Reading from the N-terminus, the 682-residue chain is Potassium-transporting ATPase ATP-binding subunit (682 aa).

4 consecutive transmembrane segments (helical) span residues 34–54 (PVMF…IAMA), 62–82 (ALFS…ANFA), 219–239 (IALT…TATL), and 254–274 (VLVA…LSAI). The active-site 4-aspartylphosphate intermediate is the Asp307. Residues Asp344, Glu348, 377-384 (FTAQSRMS), and Lys395 contribute to the ATP site. Residues Asp518 and Asp522 each contribute to the Mg(2+) site. The next 3 membrane-spanning stretches (helical) occupy residues 588–608 (FAII…LNIM), 616–636 (AILS…PLAL), and 656–676 (IYGL…DLLL).

It belongs to the cation transport ATPase (P-type) (TC 3.A.3) family. Type IA subfamily. As to quaternary structure, the system is composed of three essential subunits: KdpA, KdpB and KdpC.

It localises to the cell inner membrane. The catalysed reaction is K(+)(out) + ATP + H2O = K(+)(in) + ADP + phosphate + H(+). Functionally, part of the high-affinity ATP-driven potassium transport (or Kdp) system, which catalyzes the hydrolysis of ATP coupled with the electrogenic transport of potassium into the cytoplasm. This subunit is responsible for energy coupling to the transport system and for the release of the potassium ions to the cytoplasm. The protein is Potassium-transporting ATPase ATP-binding subunit of Escherichia coli (strain UTI89 / UPEC).